The primary structure comprises 302 residues: UDP-N-acetylenolpyruvoylglucosamine reductase (302 aa).

Positions 29-192 constitute an FAD-binding PCMH-type domain; the sequence is KVGGPVDLLA…VAVTLQLSED (164 aa). Residue Arg172 is part of the active site. Ser221 acts as the Proton donor in catalysis. Glu291 is an active-site residue.

It belongs to the MurB family. Requires FAD as cofactor.

Its subcellular location is the cytoplasm. The enzyme catalyses UDP-N-acetyl-alpha-D-muramate + NADP(+) = UDP-N-acetyl-3-O-(1-carboxyvinyl)-alpha-D-glucosamine + NADPH + H(+). Its pathway is cell wall biogenesis; peptidoglycan biosynthesis. In terms of biological role, cell wall formation. The sequence is that of UDP-N-acetylenolpyruvoylglucosamine reductase from Trichlorobacter lovleyi (strain ATCC BAA-1151 / DSM 17278 / SZ) (Geobacter lovleyi).